The sequence spans 273 residues: Undecaprenyl-diphosphatase (273 aa).

6 consecutive transmembrane segments (helical) span residues Ile43–Tyr63, Lys82–Ile102, Leu109–Ala129, Thr185–Leu205, Ala214–Val234, and Phe249–Ile269.

This sequence belongs to the UppP family.

It localises to the cell inner membrane. The catalysed reaction is di-trans,octa-cis-undecaprenyl diphosphate + H2O = di-trans,octa-cis-undecaprenyl phosphate + phosphate + H(+). Its function is as follows. Catalyzes the dephosphorylation of undecaprenyl diphosphate (UPP). Confers resistance to bacitracin. The polypeptide is Undecaprenyl-diphosphatase (Laribacter hongkongensis (strain HLHK9)).